Here is a 304-residue protein sequence, read N- to C-terminus: Protein PagO (304 aa).

A run of 10 helical transmembrane segments spans residues 4–24 (VSIS…WLAM), 34–54 (VFAT…IAWL), 67–87 (LFQF…MIYG), 95–115 (LAAI…VLFL), 119–139 (AKLM…GILL), 150–170 (WQGI…YTQC), 180–200 (ITFN…TGWF), 214–234 (ILAT…CYFA), 246–266 (LVFL…YGYA), and 267–287 (ISTH…LTLV). 2 EamA domains span residues 15-139 (LTWG…GILL) and 161-287 (LIHA…LTLV).

This sequence belongs to the EamA transporter family.

It is found in the cell membrane. The protein is Protein PagO (pagO) of Salmonella typhimurium (strain LT2 / SGSC1412 / ATCC 700720).